We begin with the raw amino-acid sequence, 399 residues long: Serpin-Z4 (399 aa).

Residues 36–56 (GNVAFSPLSLHVALSLITAGA) form a signal for targeting protein Z4 into the ER lumen region. The tract at residues 343 to 367 (GTEAGAATVAMGVAMSMPLKVDLVD) is RCL.

The protein belongs to the serpin family. In terms of tissue distribution, highly expressed in embryo and endosperm. Is accumulated and stored in the endosperm, where it exists in a free and a bound form. Expressed in roots, coleoptiles, shoots and leaves.

In terms of biological role, a major component of the endosperm albumin, this protein acts as a storage protein during grain filling, contributing a substantial part of the grain's lysine. May have an inhibitory function during filling or germination. Inhibits cathepsin G in vitro. The protein is Serpin-Z4 (PAZ1) of Hordeum vulgare (Barley).